A 230-amino-acid chain; its full sequence is Triggering receptor expressed on myeloid cells 1 (230 aa).

A signal peptide spans 1–20 (MRKAGLWGLLCVFFVSEVKA). The Ig-like V-type domain occupies 21-124 (AIVLEEERYD…IYHPPNDPVV (104 aa)). Topologically, residues 21 to 202 (AIVLEEERYD…TDADSVSTSS (182 aa)) are extracellular. A disulfide bond links C41 and C113. N191 carries an N-linked (GlcNAc...) asparagine glycan. Residues 203–223 (VTISVICGLLSKSLVFIILFI) form a helical membrane-spanning segment. At 224–230 (VTKRTFG) the chain is on the cytoplasmic side.

As to quaternary structure, monomer. Homomultimer; when activated. Interacts with TYROBP/DAP12. Interacts with TLR4.

The protein resides in the cell membrane. Functionally, cell surface receptor that plays important roles in innate and adaptive immunity by amplifying inflammatory responses. Upon activation by various ligands such as PGLYRP1, HMGB1 or HSP70, multimerizes and forms a complex with transmembrane adapter TYROBP/DAP12. In turn, initiates a SYK-mediated cascade of tyrosine phosphorylation, activating multiple downstream mediators such as BTK, MAPK1, MAPK3 or phospholipase C-gamma. This cascade promotes the neutrophil- and macrophage-mediated release of pro-inflammatory cytokines and/or chemokines, as well as their migration and thereby amplifies inflammatory responses that are triggered by bacterial and fungal infections. By also promoting the amplification of inflammatory signals that are initially triggered by Toll-like receptor (TLR) and NOD-like receptor engagement, plays a major role in the pathophysiology of acute and chronic inflammatory diseases of different etiologies including septic shock and atherosclerosis. In Mus musculus (Mouse), this protein is Triggering receptor expressed on myeloid cells 1 (Trem1).